A 152-amino-acid chain; its full sequence is Large ribosomal subunit protein uL13 (152 aa).

Belongs to the universal ribosomal protein uL13 family. In terms of assembly, part of the 50S ribosomal subunit.

This protein is one of the early assembly proteins of the 50S ribosomal subunit, although it is not seen to bind rRNA by itself. It is important during the early stages of 50S assembly. The sequence is that of Large ribosomal subunit protein uL13 from Borreliella afzelii (strain PKo) (Borrelia afzelii).